Here is a 197-residue protein sequence, read N- to C-terminus: RNA pyrophosphohydrolase (197 aa).

Positions 6 to 150 constitute a Nudix hydrolase domain; the sequence is GYRPNVGIVI…KRDVYRKVMR (145 aa). The short motif at 38–59 is the Nudix box element; sequence GGINEGENIETAMYRELYEEVG.

This sequence belongs to the Nudix hydrolase family. RppH subfamily. A divalent metal cation is required as a cofactor.

Functionally, accelerates the degradation of transcripts by removing pyrophosphate from the 5'-end of triphosphorylated RNA, leading to a more labile monophosphorylated state that can stimulate subsequent ribonuclease cleavage. The sequence is that of RNA pyrophosphohydrolase from Haemophilus ducreyi (strain 35000HP / ATCC 700724).